Here is a 227-residue protein sequence, read N- to C-terminus: Cytochrome c oxidase subunit 2 (227 aa).

The Mitochondrial intermembrane segment spans residues 1–14 (MAYPFQLGLQDATS). Residues 15 to 45 (PIMEELLHFHDHTLMIVFLISSLVLYIISLM) traverse the membrane as a helical segment. The Mitochondrial matrix portion of the chain corresponds to 46–59 (LTTKLTHTSTMDAQ). A helical transmembrane segment spans residues 60–87 (EVETVWTILPAIILILIALPSLRILYMM). The Mitochondrial intermembrane portion of the chain corresponds to 88–227 (DEINNPSLTV…YFETWSAVMV (140 aa)). Cu cation-binding residues include His-161, Cys-196, Glu-198, Cys-200, His-204, and Met-207. Mg(2+) is bound at residue Glu-198. Tyr-218 carries the post-translational modification Phosphotyrosine.

The protein belongs to the cytochrome c oxidase subunit 2 family. As to quaternary structure, component of the cytochrome c oxidase (complex IV, CIV), a multisubunit enzyme composed of 14 subunits. The complex is composed of a catalytic core of 3 subunits MT-CO1, MT-CO2 and MT-CO3, encoded in the mitochondrial DNA, and 11 supernumerary subunits COX4I, COX5A, COX5B, COX6A, COX6B, COX6C, COX7A, COX7B, COX7C, COX8 and NDUFA4, which are encoded in the nuclear genome. The complex exists as a monomer or a dimer and forms supercomplexes (SCs) in the inner mitochondrial membrane with NADH-ubiquinone oxidoreductase (complex I, CI) and ubiquinol-cytochrome c oxidoreductase (cytochrome b-c1 complex, complex III, CIII), resulting in different assemblies (supercomplex SCI(1)III(2)IV(1) and megacomplex MCI(2)III(2)IV(2)). Found in a complex with TMEM177, COA6, COX18, COX20, SCO1 and SCO2. Interacts with TMEM177 in a COX20-dependent manner. Interacts with COX20. Interacts with COX16. It depends on Cu cation as a cofactor.

It localises to the mitochondrion inner membrane. It catalyses the reaction 4 Fe(II)-[cytochrome c] + O2 + 8 H(+)(in) = 4 Fe(III)-[cytochrome c] + 2 H2O + 4 H(+)(out). Its function is as follows. Component of the cytochrome c oxidase, the last enzyme in the mitochondrial electron transport chain which drives oxidative phosphorylation. The respiratory chain contains 3 multisubunit complexes succinate dehydrogenase (complex II, CII), ubiquinol-cytochrome c oxidoreductase (cytochrome b-c1 complex, complex III, CIII) and cytochrome c oxidase (complex IV, CIV), that cooperate to transfer electrons derived from NADH and succinate to molecular oxygen, creating an electrochemical gradient over the inner membrane that drives transmembrane transport and the ATP synthase. Cytochrome c oxidase is the component of the respiratory chain that catalyzes the reduction of oxygen to water. Electrons originating from reduced cytochrome c in the intermembrane space (IMS) are transferred via the dinuclear copper A center (CU(A)) of subunit 2 and heme A of subunit 1 to the active site in subunit 1, a binuclear center (BNC) formed by heme A3 and copper B (CU(B)). The BNC reduces molecular oxygen to 2 water molecules using 4 electrons from cytochrome c in the IMS and 4 protons from the mitochondrial matrix. The polypeptide is Cytochrome c oxidase subunit 2 (MT-CO2) (Lycalopex sechurae (Sechuran desert fox)).